Consider the following 544-residue polypeptide: Chaperonin GroEL 1 (544 aa).

ATP contacts are provided by residues 29 to 32 (TLGP), 86 to 90 (DGTTT), glycine 413, 476 to 478 (NAA), and aspartate 492. The segment at 523–544 (EPVKAPAGGGDMDGMGGMGGMM) is disordered. The segment covering 529–544 (AGGGDMDGMGGMGGMM) has biased composition (gly residues).

The protein belongs to the chaperonin (HSP60) family. In terms of assembly, forms a cylinder of 14 subunits composed of two heptameric rings stacked back-to-back. Interacts with the co-chaperonin GroES.

Its subcellular location is the cytoplasm. The catalysed reaction is ATP + H2O + a folded polypeptide = ADP + phosphate + an unfolded polypeptide.. Together with its co-chaperonin GroES, plays an essential role in assisting protein folding. The GroEL-GroES system forms a nano-cage that allows encapsulation of the non-native substrate proteins and provides a physical environment optimized to promote and accelerate protein folding. This is Chaperonin GroEL 1 from Cutibacterium acnes (strain DSM 16379 / KPA171202) (Propionibacterium acnes).